A 336-amino-acid polypeptide reads, in one-letter code: Large ribosomal subunit protein uL1m (336 aa).

The transit peptide at 1-50 (MAAAVRCLRRVLIHHQRHCLCKMASQASLYPCSVNSLLHNRHFAAAAAAA) directs the protein to the mitochondrion. Serine 85 is modified (phosphoserine).

This sequence belongs to the universal ribosomal protein uL1 family.

It localises to the mitochondrion. This chain is Large ribosomal subunit protein uL1m (Mrpl1), found in Mus musculus (Mouse).